The primary structure comprises 393 residues: Cysteine protease ATG4B (393 aa).

N-acetylmethionine is present on M1. S34 bears the Phosphoserine mark. The Nucleophile role is filled by C74. C189 is subject to S-nitrosocysteine. Catalysis depends on residues D278 and H280. 2 positions are modified to S-nitrosocysteine: C292 and C301. C292 and C361 are joined by a disulfide. Phosphoserine is present on residues S316 and S383. The short motif at 388–391 (FEIL) is the LIR element. A Phosphoserine modification is found at S392.

It belongs to the peptidase C54 family. Interacts with PFKP; promoting phosphorylation of ATG4B at Ser-34. Interacts with GBP7. Post-translationally, phosphorylation at Ser-383 and Ser-392 promotes autophagy by increasing protein delipidation activity without affecting proteolytic activation of ATG8 proteins. Phosphorylation at Ser-316 by ULK1 inhibits autophagy by decreasing both proteolytic activation and delipidation activities. Phosphorylation at Ser-316 is dephosphorylated by protein phosphatase 2A (PP2A). Phosphorylation at Ser-34 by AKT2 promotes its hydrolase activity, leading to increased proteolytic activation and delipidation of ATG8 family proteins. Phosphorylation at Ser-34 by AKT1 promotes mitochondrial localization and inhibition of the F1F0-ATP synthase activity, leading to elevation of mitochondrial reactive oxygen species (ROS). In terms of processing, ubiquitinated by RNF5, leading to its degradation by the proteasome. S-nitrosylation at Cys-189 and Cys-292 in response to high glucose decreases both proteolytic activation and delipidation activities. Post-translationally, O-glycosylated by OGT, leading to increase protease activity, thereby promoting the proteolytic activation of ATG8 family proteins. In terms of processing, forms reversible intrachain disulfide bonds in response to oxidative stress. Forms interchain disulfide bonds, leading to formation of homooligomers in response to oxidation.

The protein resides in the cytoplasm. The protein localises to the cytosol. Its subcellular location is the cytoplasmic vesicle. It is found in the autophagosome. It localises to the endoplasmic reticulum. The protein resides in the mitochondrion. The catalysed reaction is [protein]-C-terminal L-amino acid-glycyl-phosphatidylethanolamide + H2O = [protein]-C-terminal L-amino acid-glycine + a 1,2-diacyl-sn-glycero-3-phosphoethanolamine. It catalyses the reaction [protein]-C-terminal L-amino acid-glycyl-phosphatidylserine + H2O = [protein]-C-terminal L-amino acid-glycine + a 1,2-diacyl-sn-glycero-3-phospho-L-serine. With respect to regulation, inhibited by N-ethylmaleimide. Redox-regulated during autophagy since reducing conditions activate ATG4A whereas an oxidizing environment such as the presence of H(2)O(2) inhibits its activity. The cysteine protease activity compounds is inhibited by styrylquinoline compounds 4-28 and LV-320. Its function is as follows. Cysteine protease that plays a key role in autophagy by mediating both proteolytic activation and delipidation of ATG8 family proteins. Required for canonical autophagy (macroautophagy), non-canonical autophagy as well as for mitophagy. The protease activity is required for proteolytic activation of ATG8 family proteins: cleaves the C-terminal amino acid of ATG8 proteins MAP1LC3A, MAP1LC3B, MAP1LC3C, GABARAPL1, GABARAPL2 and GABARAP, to reveal a C-terminal glycine. Exposure of the glycine at the C-terminus is essential for ATG8 proteins conjugation to phosphatidylethanolamine (PE) and insertion to membranes, which is necessary for autophagy. Protease activity is also required to counteract formation of high-molecular weight conjugates of ATG8 proteins (ATG8ylation): acts as a deubiquitinating-like enzyme that removes ATG8 conjugated to other proteins, such as ATG3. In addition to the protease activity, also mediates delipidation of ATG8 family proteins. Catalyzes delipidation of PE-conjugated forms of ATG8 proteins during macroautophagy. Also involved in non-canonical autophagy, a parallel pathway involving conjugation of ATG8 proteins to single membranes at endolysosomal compartments, by catalyzing delipidation of ATG8 proteins conjugated to phosphatidylserine (PS). Compared to other members of the family (ATG4A, ATG4C or ATG4C), constitutes the major protein for proteolytic activation of ATG8 proteins, while it displays weaker delipidation activity than other ATG4 paralogs. Involved in phagophore growth during mitophagy independently of its protease activity and of ATG8 proteins: acts by regulating ATG9A trafficking to mitochondria and promoting phagophore-endoplasmic reticulum contacts during the lipid transfer phase of mitophagy. Functionally, (Microbial infection) Mediates cleavage of an ATG8 protein homolog coded in the genome of cytopathogenic bovine viral diarrhea virus (BVDV). This is Cysteine protease ATG4B (ATG4B) from Bos taurus (Bovine).